A 103-amino-acid polypeptide reads, in one-letter code: Large ribosomal subunit protein bL21 (103 aa).

The protein belongs to the bacterial ribosomal protein bL21 family. Part of the 50S ribosomal subunit. Contacts protein L20.

This protein binds to 23S rRNA in the presence of protein L20. This Acidovorax ebreus (strain TPSY) (Diaphorobacter sp. (strain TPSY)) protein is Large ribosomal subunit protein bL21.